The primary structure comprises 363 residues: Protein RecA (363 aa).

79 to 86 contacts ATP; that stretch reads GPESSGKT.

This sequence belongs to the RecA family.

The protein resides in the cytoplasm. Can catalyze the hydrolysis of ATP in the presence of single-stranded DNA, the ATP-dependent uptake of single-stranded DNA by duplex DNA, and the ATP-dependent hybridization of homologous single-stranded DNAs. It interacts with LexA causing its activation and leading to its autocatalytic cleavage. The protein is Protein RecA of Borrelia duttonii (strain Ly).